We begin with the raw amino-acid sequence, 37 residues long: Large ribosomal subunit protein bL36c (37 aa).

Belongs to the bacterial ribosomal protein bL36 family.

It localises to the plastid. The protein localises to the cyanelle. The chain is Large ribosomal subunit protein bL36c (rpl36) from Cyanophora paradoxa.